The following is a 310-amino-acid chain: Ribosomal RNA small subunit methyltransferase H (310 aa).

Residues 33–35, Asp52, Phe79, Asp98, and Gln105 each bind S-adenosyl-L-methionine; that span reads GGH.

This sequence belongs to the methyltransferase superfamily. RsmH family.

The protein localises to the cytoplasm. The enzyme catalyses cytidine(1402) in 16S rRNA + S-adenosyl-L-methionine = N(4)-methylcytidine(1402) in 16S rRNA + S-adenosyl-L-homocysteine + H(+). Its function is as follows. Specifically methylates the N4 position of cytidine in position 1402 (C1402) of 16S rRNA. This is Ribosomal RNA small subunit methyltransferase H from Campylobacter jejuni subsp. jejuni serotype O:23/36 (strain 81-176).